The sequence spans 115 residues: uncharacterized protein (115 aa).

3 helical membrane passes run 6-26 (ILII…PFMV), 43-63 (ALSC…IHIL), and 84-104 (IFKV…VLVQ).

It belongs to the AzlD/HI_1737/HP1330 family.

The protein resides in the cell membrane. This is an uncharacterized protein from Helicobacter pylori (strain ATCC 700392 / 26695) (Campylobacter pylori).